A 245-amino-acid polypeptide reads, in one-letter code: Large ribosomal subunit protein uL4 (245 aa).

Polar residues predominate over residues 1 to 13 (MSRVATSDPSVTA). Disordered stretches follow at residues 1-28 (MSRV…EGGS), 56-114 (ARQG…QRTP), and 224-245 (TSTA…EENK). Residues 59–71 (GTHDTKTRGEVRG) are compositionally biased toward basic and acidic residues. Residues 72-83 (GGRKPYRQKGTG) are compositionally biased toward basic residues.

It belongs to the universal ribosomal protein uL4 family. As to quaternary structure, part of the 50S ribosomal subunit.

Its function is as follows. One of the primary rRNA binding proteins, this protein initially binds near the 5'-end of the 23S rRNA. It is important during the early stages of 50S assembly. It makes multiple contacts with different domains of the 23S rRNA in the assembled 50S subunit and ribosome. In terms of biological role, forms part of the polypeptide exit tunnel. The polypeptide is Large ribosomal subunit protein uL4 (Frankia casuarinae (strain DSM 45818 / CECT 9043 / HFP020203 / CcI3)).